The primary structure comprises 354 residues: Probable glucan endo-1,3-beta-glucosidase BG5 (354 aa).

The N-terminal stretch at 1-30 is a signal peptide; it reads MLYLPKKLFLFFFSCIVVIVNYNNSDFVNA. Glu-137 functions as the Proton donor in the catalytic mechanism. Glu-276 functions as the Nucleophile in the catalytic mechanism. Asn-286 carries N-linked (GlcNAc...) asparagine glycosylation.

Belongs to the glycosyl hydrolase 17 family.

The protein localises to the secreted. The enzyme catalyses Hydrolysis of (1-&gt;3)-beta-D-glucosidic linkages in (1-&gt;3)-beta-D-glucans.. Functionally, may play a role in plant defense against pathogens. The chain is Probable glucan endo-1,3-beta-glucosidase BG5 from Arabidopsis thaliana (Mouse-ear cress).